A 691-amino-acid polypeptide reads, in one-letter code: Elongation factor G (691 aa).

The tr-type G domain occupies 8–282; the sequence is ERVRNIGIAA…AVVDYLPAPI (275 aa). GTP is bound by residues 17–24, 81–85, and 135–138; these read AHIDAGKT, DTPGH, and NKMD.

Belongs to the TRAFAC class translation factor GTPase superfamily. Classic translation factor GTPase family. EF-G/EF-2 subfamily.

It is found in the cytoplasm. Its function is as follows. Catalyzes the GTP-dependent ribosomal translocation step during translation elongation. During this step, the ribosome changes from the pre-translocational (PRE) to the post-translocational (POST) state as the newly formed A-site-bound peptidyl-tRNA and P-site-bound deacylated tRNA move to the P and E sites, respectively. Catalyzes the coordinated movement of the two tRNA molecules, the mRNA and conformational changes in the ribosome. This chain is Elongation factor G, found in Prochlorococcus marinus subsp. pastoris (strain CCMP1986 / NIES-2087 / MED4).